Consider the following 357-residue polypeptide: Sorbitol dehydrogenase (357 aa).

An N-acetylalanine modification is found at A2. Residue C45 coordinates Zn(2+). A substrate-binding site is contributed by Y51. Zn(2+) contacts are provided by H70, E71, and E156. E156 provides a ligand contact to substrate. S169 bears the Phosphoserine mark. NAD(+)-binding positions include I184, D204, R209, 273–275 (VGM), and 297–299 (VFR). The substrate site is built by R299 and Y300.

This sequence belongs to the zinc-containing alcohol dehydrogenase family. As to quaternary structure, homotetramer; dimer of dimers. The cofactor is Zn(2+). In terms of tissue distribution, expressed in liver and testis.

The protein localises to the mitochondrion membrane. It localises to the cell projection. It is found in the cilium. The protein resides in the flagellum. It carries out the reaction keto-D-fructose + NADH + H(+) = D-sorbitol + NAD(+). The enzyme catalyses xylitol + NAD(+) = D-xylulose + NADH + H(+). It catalyses the reaction L-iditol + NAD(+) = keto-L-sorbose + NADH + H(+). Polyol dehydrogenase that catalyzes the reversible NAD(+)-dependent oxidation of various sugar alcohols. Is active with D-sorbitol (D-glucitol) leading to the C2-oxidized product D-fructose. Is a key enzyme in the polyol pathway that interconverts glucose and fructose via sorbitol, which constitutes an important alternate route for glucose metabolism. May play a role in sperm motility by using sorbitol as an alternative energy source for sperm motility. This Rattus norvegicus (Rat) protein is Sorbitol dehydrogenase (Sord).